Here is a 2715-residue protein sequence, read N- to C-terminus: MAAAAGGGSCPGPGSARGRFPGRPRGAGGGGGRGGRGNGAERVRVALRRGGGATGPGGAEPGEDTALLRLLGLRRGLRRLRRLWAGPRVQRGRGRGRGRGWGPSRGCVPEEESSDGESDEEEFQGFHSDEDVAPSSLRSALRSQRGRAPRGRGRKHKTTPLPPPRLADVAPTPPKTPARKRGEEGTERMVQALTELLRRAQAPQAPRSRACEPSTPRRSRGRPPGRPAGPCRRKQQAVVVAEAAVTIPKPEPPPPVVPVKHQTGSWKCKEGPGPGPGTPRRGGQSSRGGRGGRGRGRGGGLPFVIKFVSRAKKVKMGQLSLGLESGQGQGQHEESWQDVPQRRVGSGQGGSPCWKKQEQKLDDEEEEKKEEEEKDKEGEEKEERAVAEEMMPAAEKEEAKLPPPPLTPPAPSPPPPLPPPSTSPPPPLCPPPPPPVSPPPLPSPPPPPAQEEQEESPPPVVPATCSRKRGRPPLTPSQRAEREAARAGPEGTSPPTPTPSTATGGPPEDSPTVAPKSTTFLKNIRQFIMPVVSARSSRVIKTPRRFMDEDPPKPPKVEVSPVLRPPITTSPPVPQEPAPVPSPPRAPTPPSTPVPLPEKRRSILREPTFRWTSLTRELPPPPPAPPPPPAPSPPPAPATSSRRPLLLRAPQFTPSEAHLKIYESVLTPPPLGAPEAPEPEPPPADDSPAEPEPRAVGRTNHLSLPRFAPVVTTPVKAEVSPHGAPALSNGPQTQAQLLQPLQALQTQLLPQALPPPQPQLQPPPSPQQMPPLEKARIAGVGSLPLSGVEEKMFSLLKRAKVQLFKIDQQQQQKVAASMPLSPGGQMEEVAGAVKQISDRGPVRSEDESVEAKRERPSGPESPVQGPRIKHVCRHAAVALGQARAMVPEDVPRLSALPLRDRQDLATEDTSSASETESVPSRSRRGKVEAAGPGGESEPTGSGGTLAHTPRRSLPSHHGKKMRMARCGHCRGCLRVQDCGSCVNCLDKPKFGGPNTKKQCCVYRKCDKIEARKMERLAKKGRTIVKTLLPWDSDESPEASPGPPGPRRGAGAGGPREEVVAHPGPEEQDSLLQRKSARRCVKQRPSYDIFEDSDDSEPGGPPAPRRRTPRENELPLPEPEEQSRPRKPTLQPVLQLKARRRLDKDALAPGPFASFPNGWTGKQKSPDGVHRVRVDFKEDCDLENVWLMGGLSVLTSVPGGPPMVCLLCASKGLHELVFCQVCCDPFHPFCLEEAERPLPQHHDTWCCRRCKFCHVCGRKGRGSKHLLECERCRHAYHPACLGPSYPTRATRKRRHWICSACVRCKSCGATPGKNWDVEWSGDYSLCPRCTQLYEKGNYCPICTRCYEDNDYESKMMQCAQCDHWVHAKCEGLSDEDYEILSGLPDSVLYTCGPCAGAAQPRWREALSGALQGGLRQVLQGLLSSKVVGPLLLCTQCGPDGKQLHPGPCGLQAVSQRFEDGHYKSVHSFMEDMVGILMRHSEEGETPDRRAGGQMKGLLLKLLESAFGWFDAHDPKYWRRSTRLPNGVLPNAVLPPSLDHVYAQWRQQEPETPESGQPPGDPSAAFQGKDPAAFSHLEDPRQCALCLKYGDADSKEAGRLLYIGQNEWTHVNCAIWSAEVFEENDGSLKNVHAAVARGRQMRCELCLKPGATVGCCLSSCLSNFHFMCARASYCIFQDDKKVFCQKHTDLLDGKEIVNPDGFDVLRRVYVDFEGINFKRKFLTGLEPDAINVLIGSIRIDSLGTLSDLSDCEGRLFPIGYQCSRLYWSTVDARRRCWYRCRILEYRPWGPREEPAHLEAAEENQTIVHSPAPSSEPPGGEDPPLDTDVLVPGAPERHSPIQNLDPPLRPDSGSAPPPAPRSFSGARIKVPNYSPSRRPLGGVSFGPLPSPGSPSSLTHHIPTVGDPDFPAPPRRSRRPSPLAPRPPPSRWASPPLKTSPQLRVPPPTSVVTALTPTSGELAPPGPAPSPPPPEDLGPDFEDMEVVSGLSAADLDFAASLLGTEPFQEEIVAAGAMGSSHGGPGDSSEEESSPTSRYIHFPVTVVSAPGLAPSATPGAPRIEQLDGVDDGTDSEAEAVQQPRGQGTPPSGPGVVRAGVLGAAGDRARPPEDLPSEIVDFVLKNLGGPGDGGAGPREESLPPAPPLANGSQPSQGLTASPADPTRTFAWLPGAPGVRVLSLGPAPEPPKPATSKIILVNKLGQVFVKMAGEGEPVPPPVKQPPLPPTISPTAPTSWTLPPGPLLGVLPVVGVVRPAPPPPPPPLTLVLSSGPASPPRQAIRVKRVSTFSGRSPPAPPPYKAPRLDEDGEASEDTPQVPGLGSGGFSRVRMKTPTVRGVLDLDRPGEPAGEESPGPLQERSPLLPLPEDGPPQVPDGPPDLLLESQWHHYSGEASSSEEEPPSPDDKENQAPKRTGPHLRFEISSEDGFSVEAESLEGAWRTLIEKVQEARGHARLRHLSFSGMSGARLLGIHHDAVIFLAEQLPGAQRCQHYKFRYHQQGEGQEEPPLNPHGAARAEVYLRKCTFDMFNFLASQHRVLPEGATCDEEEDEVQLRSTRRATSLELPMAMRFRHLKKTSKEAVGVYRSAIHGRGLFCKRNIDAGEMVIEYSGIVIRSVLTDKREKFYDGKGIGCYMFRMDDFDVVDATMHGNAARFINHSCEPNCFSRVIHVEGQKHIVIFALRRILRGEELTYDYKFPIEDASNKLPCNCGAKRCRRFLN.

A compositionally biased stretch (gly residues) spans 1-11 (MAAAAGGGSCP). Disordered regions lie at residues 1-65 (MAAA…GEDT), 81-302 (RRLW…GGLP), 320-518 (SLGL…PKST), and 532-771 (VSAR…QMPP). Ala-2 bears the N-acetylalanine mark. Low complexity predominate over residues 12–24 (GPGSARGRFPGRP). Positions 17 to 36 (RGRFPGRPRGAGGGGGRGGR) match the Menin-binding motif (MBM) motif. Composition is skewed to gly residues over residues 25–38 (RGAG…GRGN) and 49–60 (RGGGATGPGGAE). The a.T hook 1 DNA-binding region spans 37–44 (GNGAERVR). Residues 109-123 (PEEESSDGESDEEEF) show a composition bias toward acidic residues. A DNA-binding region (a.T hook 2) is located at residues 110 to 117 (EEESSDGE). A phosphoserine mark is found at Ser-113, Ser-114, and Ser-118. Basic residues predominate over residues 144–158 (QRGRAPRGRGRKHKT). The segment covering 160 to 176 (PLPPPRLADVAPTPPKT) has biased composition (pro residues). Residues 199 to 208 (RAQAPQAPRS) show a composition bias toward low complexity. Ser-351 bears the Phosphoserine mark. The a.T hook 3 DNA-binding region spans 357 to 365 (QEQKLDDEE). Acidic residues predominate over residues 361–374 (LDDEEEEKKEEEEK). The span at 375–387 (DKEGEEKEERAVA) shows a compositional bias: basic and acidic residues. Residues 401–449 (LPPPPLTPPAPSPPPPLPPPSTSPPPPLCPPPPPPVSPPPLPSPPPPPA) are compositionally biased toward pro residues. Basic and acidic residues predominate over residues 545-556 (RFMDEDPPKPPK). Pro residues predominate over residues 568–596 (TTSPPVPQEPAPVPSPPRAPTPPSTPVPL). The segment covering 597–608 (PEKRRSILREPT) has biased composition (basic and acidic residues). Residues 618 to 637 (LPPPPPAPPPPPAPSPPPAP) are compositionally biased toward pro residues. The span at 731 to 751 (PQTQAQLLQPLQALQTQLLPQ) shows a compositional bias: low complexity. Positions 752–769 (ALPPPQPQLQPPPSPQQM) are enriched in pro residues. Lys-805 participates in a covalent cross-link: Glycyl lysine isopeptide (Lys-Gly) (interchain with G-Cter in SUMO2). Disordered stretches follow at residues 819 to 868 (PLSP…GPRI) and 894 to 959 (SALP…HHGK). Phosphoserine is present on residues Ser-821, Ser-844, and Ser-861. The span at 836-857 (ISDRGPVRSEDESVEAKRERPS) shows a compositional bias: basic and acidic residues. A compositionally biased stretch (low complexity) spans 907–917 (EDTSSASETES). Residue Ser-936 is modified to Phosphoserine. Over residues 948–959 (TPRRSLPSHHGK) the composition is skewed to basic residues. The segment at 959–1006 (KKMRMARCGHCRGCLRVQDCGSCVNCLDKPKFGGPNTKKQCCVYRKCD) adopts a CXXC-type zinc-finger fold. Zn(2+) is bound by residues Cys-966, Cys-969, Cys-972, Cys-978, Cys-981, Cys-984, Cys-1000, and Cys-1005. Positions 1027 to 1132 (LLPWDSDESP…RPRKPTLQPV (106 aa)) are disordered. A phosphoserine mark is found at Ser-1032, Ser-1035, Ser-1092, and Ser-1095. Residue Lys-1136 forms a Glycyl lysine isopeptide (Lys-Gly) (interchain with G-Cter in SUMO2) linkage. The interval 1146–1166 (LAPGPFASFPNGWTGKQKSPD) is disordered. PHD-type zinc fingers lie at residues 1201–1252 (PMVC…CKFC), 1249–1303 (CKFC…CVRC), and 1335–1396 (GNYC…CAGA). The Bromo domain maps to 1404-1504 (ALSGALQGGL…GLLLKLLESA (101 aa)). The interval 1545–1567 (QQEPETPESGQPPGDPSAAFQGK) is disordered. Residues 1578-1618 (PRQCALCLKYGDADSKEAGRLLYIGQNEWTHVNCAIWSAEV) form a C2HC pre-PHD-type zinc finger. Residues 1639 to 1686 (MRCELCLKPGATVGCCLSSCLSNFHFMCARASYCIFQDDKKVFCQKHT) form a PHD-type 4 zinc finger. The FYR N-terminal domain maps to 1727 to 1783 (AINVLIGSIRIDSLGTLSDLSDCEGRLFPIGYQCSRLYWSTVDARRRCWYRCRILEY). Disordered regions lie at residues 1806–1978 (HSPA…PDFE), 2008–2093 (VAAG…VVRA), 2118–2162 (LKNL…PTRT), and 2280–2412 (RVST…RTGP). Over residues 1876-1894 (PLGGVSFGPLPSPGSPSSL) the composition is skewed to low complexity. A phosphoserine mark is found at Ser-1930 and Ser-1936. The segment covering 1960–1972 (PPGPAPSPPPPED) has biased composition (pro residues). Residues 2062–2072 (DGVDDGTDSEA) show a composition bias toward acidic residues. Phosphothreonine is present on residues Thr-2068 and Thr-2083. Residues 2144–2153 (NGSQPSQGLT) are compositionally biased toward polar residues. Phosphoserine is present on residues Ser-2288 and Ser-2348. A compositionally biased stretch (low complexity) spans 2342–2351 (EPAGEESPGP). A compositionally biased stretch (pro residues) spans 2359–2373 (LPLPEDGPPQVPDGP). The 82-residue stretch at 2411-2492 (GPHLRFEISS…QRCQHYKFRY (82 aa)) folds into the FYR C-terminal domain. A WDR5 interaction motif (WIN) motif is present at residues 2508-2513 (GAARAE). In terms of domain architecture, SET spans 2575–2691 (EAVGVYRSAI…RGEELTYDYK (117 aa)). Residues His-2585, Arg-2587, Tyr-2629, and 2652-2653 (NH) contribute to the S-adenosyl-L-methionine site. Zn(2+)-binding residues include Cys-2655 and Cys-2703. The Post-SET domain maps to 2699 to 2715 (NKLPCNCGAKRCRRFLN). Position 2704 (Asn-2704) interacts with S-adenosyl-L-methionine. Zn(2+) is bound by residues Cys-2705 and Cys-2710.

It belongs to the class V-like SAM-binding methyltransferase superfamily. Histone-lysine methyltransferase family. TRX/MLL subfamily. As to quaternary structure, component of the menin-associated histone methyltransferase complex, at least composed of KMT2B/MLL4, ASH2L, RBBP5, WDR5, DPY30, MEN1; the complex interacts with POLR2A and POLR2B via MEN1. Interacts with NFE2. Interacts with KDM6B. Interacts (via WIN motif) with WDR5. Interacts (via MBM motif) with MEN1. Forms a core complex with the evolutionary conserved subcomplex WRAD composed of WDR5, RBBP5, ASH2L/ASH2 and DPY30 subunits; WRAD differentially stimulates the methyltransferase activity. In terms of tissue distribution, widely expressed. Highest levels in testis. Also found in brain with higher expression in the cerebellum than in any other region, bone marrow, heart, muscle, kidney, placenta, spleen, thymus, prostate, ovary, intestine, colon, peripheral blood lymphocytes and pancreas. Often amplified in pancreatic carcinomas.

It is found in the nucleus. The enzyme catalyses L-lysyl(4)-[histone H3] + S-adenosyl-L-methionine = N(6)-methyl-L-lysyl(4)-[histone H3] + S-adenosyl-L-homocysteine + H(+). It catalyses the reaction N(6)-methyl-L-lysyl(4)-[histone H3] + S-adenosyl-L-methionine = N(6),N(6)-dimethyl-L-lysyl(4)-[histone H3] + S-adenosyl-L-homocysteine + H(+). In terms of biological role, histone methyltransferase that catalyzes methyl group transfer from S-adenosyl-L-methionine to the epsilon-amino group of 'Lys-4' of histone H3 (H3K4) via a non-processive mechanism. Part of chromatin remodeling machinery predominantly forms H3K4me1 and H3K4me2 methylation marks at active chromatin sites where transcription and DNA repair take place. Likely plays a redundant role with KMT2C in enriching H3K4me1 marks on primed and active enhancer elements. Plays a central role in beta-globin locus transcription regulation by being recruited by NFE2. Plays an important role in controlling bulk H3K4me during oocyte growth and preimplantation development. Required during the transcriptionally active period of oocyte growth for the establishment and/or maintenance of bulk H3K4 trimethylation (H3K4me3), global transcriptional silencing that preceeds resumption of meiosis, oocyte survival and normal zygotic genome activation. This is Histone-lysine N-methyltransferase 2B (KMT2B) from Homo sapiens (Human).